The following is a 250-amino-acid chain: tRNA pseudouridine synthase A (250 aa).

The active-site Nucleophile is aspartate 52. Tyrosine 110 is a substrate binding site.

Belongs to the tRNA pseudouridine synthase TruA family. Homodimer.

The enzyme catalyses uridine(38/39/40) in tRNA = pseudouridine(38/39/40) in tRNA. Functionally, formation of pseudouridine at positions 38, 39 and 40 in the anticodon stem and loop of transfer RNAs. The chain is tRNA pseudouridine synthase A from Citrifermentans bemidjiense (strain ATCC BAA-1014 / DSM 16622 / JCM 12645 / Bem) (Geobacter bemidjiensis).